The primary structure comprises 577 residues: Proline--tRNA ligase (577 aa).

This sequence belongs to the class-II aminoacyl-tRNA synthetase family. ProS type 1 subfamily. As to quaternary structure, homodimer.

Its subcellular location is the cytoplasm. The enzyme catalyses tRNA(Pro) + L-proline + ATP = L-prolyl-tRNA(Pro) + AMP + diphosphate. Functionally, catalyzes the attachment of proline to tRNA(Pro) in a two-step reaction: proline is first activated by ATP to form Pro-AMP and then transferred to the acceptor end of tRNA(Pro). As ProRS can inadvertently accommodate and process non-cognate amino acids such as alanine and cysteine, to avoid such errors it has two additional distinct editing activities against alanine. One activity is designated as 'pretransfer' editing and involves the tRNA(Pro)-independent hydrolysis of activated Ala-AMP. The other activity is designated 'posttransfer' editing and involves deacylation of mischarged Ala-tRNA(Pro). The misacylated Cys-tRNA(Pro) is not edited by ProRS. The polypeptide is Proline--tRNA ligase (Limosilactobacillus reuteri (strain DSM 20016) (Lactobacillus reuteri)).